The primary structure comprises 219 residues: Small ribosomal subunit protein uS3c (219 aa).

The KH type-2 domain maps to 43–118 (IKNYVQNNMI…KLNITITRIE (76 aa)).

It belongs to the universal ribosomal protein uS3 family. As to quaternary structure, part of the 30S ribosomal subunit.

Its subcellular location is the plastid. The protein is Small ribosomal subunit protein uS3c (rps3) of Cuscuta exaltata (Tall dodder).